The chain runs to 449 residues: Probable glycine dehydrogenase (decarboxylating) subunit 1 (449 aa).

The protein belongs to the GcvP family. N-terminal subunit subfamily. As to quaternary structure, the glycine cleavage system is composed of four proteins: P, T, L and H. In this organism, the P 'protein' is a heterodimer of two subunits.

The enzyme catalyses N(6)-[(R)-lipoyl]-L-lysyl-[glycine-cleavage complex H protein] + glycine + H(+) = N(6)-[(R)-S(8)-aminomethyldihydrolipoyl]-L-lysyl-[glycine-cleavage complex H protein] + CO2. Functionally, the glycine cleavage system catalyzes the degradation of glycine. The P protein binds the alpha-amino group of glycine through its pyridoxal phosphate cofactor; CO(2) is released and the remaining methylamine moiety is then transferred to the lipoamide cofactor of the H protein. This is Probable glycine dehydrogenase (decarboxylating) subunit 1 from Pyrococcus horikoshii (strain ATCC 700860 / DSM 12428 / JCM 9974 / NBRC 100139 / OT-3).